Here is a 91-residue protein sequence, read N- to C-terminus: UPF0250 protein PFLU_5418 (91 aa).

Belongs to the UPF0250 family.

The chain is UPF0250 protein PFLU_5418 from Pseudomonas fluorescens (strain SBW25).